A 164-amino-acid chain; its full sequence is Phosphopantetheine adenylyltransferase (164 aa).

Substrate is bound at residue serine 9. Residues 9–10 (SF) and histidine 17 each bind ATP. Substrate is bound by residues lysine 41, valine 78, and arginine 92. ATP-binding positions include 93 to 95 (GLR), glutamate 103, and 128 to 134 (SRPITAT).

Belongs to the bacterial CoaD family. As to quaternary structure, homohexamer. The cofactor is Mg(2+).

The protein resides in the cytoplasm. It catalyses the reaction (R)-4'-phosphopantetheine + ATP + H(+) = 3'-dephospho-CoA + diphosphate. It functions in the pathway cofactor biosynthesis; coenzyme A biosynthesis; CoA from (R)-pantothenate: step 4/5. Functionally, reversibly transfers an adenylyl group from ATP to 4'-phosphopantetheine, yielding dephospho-CoA (dPCoA) and pyrophosphate. The sequence is that of Phosphopantetheine adenylyltransferase from Rhizobium leguminosarum bv. trifolii (strain WSM2304).